Reading from the N-terminus, the 286-residue chain is Large ribosomal subunit protein uL4m (286 aa).

A mitochondrion-targeting transit peptide spans 1 to 26 (MTIKRNLVKTLQSIRYQATTATAHAE). The disordered stretch occupies residues 85–132 (RRVGASNPPGRSENGFSRRKLMPQKGSGRARVGDANSPTRHNGGRALA).

The protein belongs to the universal ribosomal protein uL4 family. In terms of assembly, component of the mitochondrial large ribosomal subunit (mt-LSU). Mature yeast 74S mitochondrial ribosomes consist of a small (37S) and a large (54S) subunit. The 37S small subunit contains a 15S ribosomal RNA (15S mt-rRNA) and 34 different proteins. The 54S large subunit contains a 21S rRNA (21S mt-rRNA) and 46 different proteins.

It localises to the mitochondrion. Component of the mitochondrial ribosome (mitoribosome), a dedicated translation machinery responsible for the synthesis of mitochondrial genome-encoded proteins, including at least some of the essential transmembrane subunits of the mitochondrial respiratory chain. The mitoribosomes are attached to the mitochondrial inner membrane and translation products are cotranslationally integrated into the membrane. The protein is Large ribosomal subunit protein uL4m (YML6) of Saccharomyces cerevisiae (strain ATCC 204508 / S288c) (Baker's yeast).